Consider the following 148-residue polypeptide: MAPKGEKKPAEKKPAEEKKSTVAEKAPAEKKPKAGKKLPKEGGSAAGEKKKKRSKKSVETYKIYIFKVLKQVHPDIGISSKAMGIMNSFINDIFEKLTQESSRLARYNKKPTITSREIQTAVRLVLPGELAKHDVSEGTKAVTKFTSS.

Residues Met-1 to Pro-32 show a composition bias toward basic and acidic residues. The disordered stretch occupies residues Met-1–Ser-57. Lys-7, Lys-36, and Lys-37 each carry N6-acetyllysine. Lys-144 is covalently cross-linked (Glycyl lysine isopeptide (Lys-Gly) (interchain with G-Cter in ubiquitin)).

Belongs to the histone H2B family. The nucleosome is a histone octamer containing two molecules each of H2A, H2B, H3 and H4 assembled in one H3-H4 heterotetramer and two H2A-H2B heterodimers. The octamer wraps approximately 147 bp of DNA. Can be acetylated to form H2BK6ac, H2BK33ac and H2BK34ac. In terms of processing, monoubiquitinated to form H2BK143ub1; may give a specific tag for epigenetic transcriptional activation.

The protein localises to the nucleus. The protein resides in the chromosome. Its function is as follows. Core component of nucleosome. Nucleosomes wrap and compact DNA into chromatin, limiting DNA accessibility to the cellular machineries which require DNA as a template. Histones thereby play a central role in transcription regulation, DNA repair, DNA replication and chromosomal stability. DNA accessibility is regulated via a complex set of post-translational modifications of histones, also called histone code, and nucleosome remodeling. The chain is Probable histone H2B.2 from Medicago truncatula (Barrel medic).